Here is a 477-residue protein sequence, read N- to C-terminus: Bifunctional protein HldE (477 aa).

Residues 1-320 (MKDSLPAFEK…SLSDTHHSET (320 aa)) form a ribokinase region. 195–198 (NLHE) lines the ATP pocket. D264 is a catalytic residue. The interval 346-477 (MTNGCFDILH…KIIENIMANQ (132 aa)) is cytidylyltransferase.

It in the N-terminal section; belongs to the carbohydrate kinase PfkB family. This sequence in the C-terminal section; belongs to the cytidylyltransferase family. Homodimer.

It catalyses the reaction D-glycero-beta-D-manno-heptose 7-phosphate + ATP = D-glycero-beta-D-manno-heptose 1,7-bisphosphate + ADP + H(+). It carries out the reaction D-glycero-beta-D-manno-heptose 1-phosphate + ATP + H(+) = ADP-D-glycero-beta-D-manno-heptose + diphosphate. It functions in the pathway nucleotide-sugar biosynthesis; ADP-L-glycero-beta-D-manno-heptose biosynthesis; ADP-L-glycero-beta-D-manno-heptose from D-glycero-beta-D-manno-heptose 7-phosphate: step 1/4. It participates in nucleotide-sugar biosynthesis; ADP-L-glycero-beta-D-manno-heptose biosynthesis; ADP-L-glycero-beta-D-manno-heptose from D-glycero-beta-D-manno-heptose 7-phosphate: step 3/4. In terms of biological role, catalyzes the phosphorylation of D-glycero-D-manno-heptose 7-phosphate at the C-1 position to selectively form D-glycero-beta-D-manno-heptose-1,7-bisphosphate. Catalyzes the ADP transfer from ATP to D-glycero-beta-D-manno-heptose 1-phosphate, yielding ADP-D-glycero-beta-D-manno-heptose. The sequence is that of Bifunctional protein HldE from Shewanella piezotolerans (strain WP3 / JCM 13877).